Reading from the N-terminus, the 237-residue chain is 4-hydroxy-tetrahydrodipicolinate reductase (237 aa).

NAD(+) contacts are provided by residues 11-16 (GASGRM), 92-94 (GTT), and 116-119 (GSNF). H148 functions as the Proton donor/acceptor in the catalytic mechanism. Position 149 (H149) interacts with (S)-2,3,4,5-tetrahydrodipicolinate. The active-site Proton donor is the K152. 158-159 (GS) lines the (S)-2,3,4,5-tetrahydrodipicolinate pocket.

It belongs to the DapB family.

The protein localises to the cytoplasm. It carries out the reaction (S)-2,3,4,5-tetrahydrodipicolinate + NAD(+) + H2O = (2S,4S)-4-hydroxy-2,3,4,5-tetrahydrodipicolinate + NADH + H(+). The catalysed reaction is (S)-2,3,4,5-tetrahydrodipicolinate + NADP(+) + H2O = (2S,4S)-4-hydroxy-2,3,4,5-tetrahydrodipicolinate + NADPH + H(+). The protein operates within amino-acid biosynthesis; L-lysine biosynthesis via DAP pathway; (S)-tetrahydrodipicolinate from L-aspartate: step 4/4. In terms of biological role, catalyzes the conversion of 4-hydroxy-tetrahydrodipicolinate (HTPA) to tetrahydrodipicolinate. This Xylella fastidiosa (strain 9a5c) protein is 4-hydroxy-tetrahydrodipicolinate reductase.